The sequence spans 391 residues: 3-ketoacyl-CoA thiolase (391 aa).

Cys-95 acts as the Acyl-thioester intermediate in catalysis. Residues His-347 and Cys-377 each act as proton acceptor in the active site.

It belongs to the thiolase-like superfamily. Thiolase family. In terms of assembly, heterotetramer of two alpha chains (FadB) and two beta chains (FadA).

The protein localises to the cytoplasm. The enzyme catalyses an acyl-CoA + acetyl-CoA = a 3-oxoacyl-CoA + CoA. The protein operates within lipid metabolism; fatty acid beta-oxidation. Functionally, catalyzes the final step of fatty acid oxidation in which acetyl-CoA is released and the CoA ester of a fatty acid two carbons shorter is formed. The polypeptide is 3-ketoacyl-CoA thiolase (Stutzerimonas stutzeri (strain A1501) (Pseudomonas stutzeri)).